We begin with the raw amino-acid sequence, 257 residues long: Cyclin-C1-1 (257 aa).

It belongs to the cyclin family. Cyclin C subfamily.

In Oryza sativa subsp. japonica (Rice), this protein is Cyclin-C1-1.